The sequence spans 227 residues: Cytidylate kinase (227 aa).

An ATP-binding site is contributed by 12–20 (GPSGAGKGT).

This sequence belongs to the cytidylate kinase family. Type 1 subfamily.

Its subcellular location is the cytoplasm. It catalyses the reaction CMP + ATP = CDP + ADP. The catalysed reaction is dCMP + ATP = dCDP + ADP. The chain is Cytidylate kinase from Salmonella paratyphi A (strain ATCC 9150 / SARB42).